The primary structure comprises 334 residues: Photosystem II assembly protein Ycf48 (334 aa).

The N-terminal stretch at 1–22 (MAKMLKLWRLVLLAAFSLLLMA) is a signal peptide.

It belongs to the Ycf48 family. Part of early PSII assembly complexes which includes D1 (psbA) and PsbI; not found in mature PSII. Binds to the lumenal side of PSII complexes. Interacts with YidC.

The protein localises to the cellular thylakoid lumen. A factor required for optimal assembly of photosystem II (PSII), acting in the early stages of PSII assembly. Also plays a role in replacement of photodamaged D1 (psbA). Assists YidC in synthesis of chlorophyll-binding proteins. This is Photosystem II assembly protein Ycf48 from Synechococcus sp. (strain JA-3-3Ab) (Cyanobacteria bacterium Yellowstone A-Prime).